A 1388-amino-acid polypeptide reads, in one-letter code: Putative ATP-dependent RNA helicase DHX57 (1388 aa).

Residues 1–11 (MSSSVRRKGKP) show a composition bias toward basic residues. 2 disordered regions span residues 1–107 (MSSS…MTSE) and 121–154 (EQGA…AGQE). Over residues 34-51 (HGGGGGGGGSCGGGGGGS) the composition is skewed to gly residues. Positions 79-89 (DSNKSKGETRP) are enriched in basic and acidic residues. A phosphoserine mark is found at Ser-128 and Ser-133. The 46-residue stretch at 175–220 (PVPECAVSPLAVQKLSRYGFHTEHCQLALRICDGDLGAALEHLLRQ) folds into the UBA domain. The segment at 299–326 (DTSPETCKFYLKGNCKFGSKCKFKHEVP) adopts a C3H1-type zinc-finger fold. Residue Ser-475 is modified to Phosphoserine. In terms of domain architecture, Helicase ATP-binding spans 555 to 722 (LKLLSKHQVV…FSYCPVITIP (168 aa)). Residue 568-575 (GMTGCGKT) participates in ATP binding. The DEVH box signature appears at 669-672 (DEVH). One can recognise a Helicase C-terminal domain in the interval 832–1012 (LIEALLEWIV…QLCLRIKILE (181 aa)).

The protein belongs to the DEAD box helicase family. DEAH subfamily.

It catalyses the reaction ATP + H2O = ADP + phosphate + H(+). Functionally, probable ATP-binding RNA helicase. The sequence is that of Putative ATP-dependent RNA helicase DHX57 (Dhx57) from Mus musculus (Mouse).